The sequence spans 456 residues: MTKKALSAVILAAGKGTRMYSDLPKVLHTIAGKPMVKHVIDTAHQLGAENIHLIYGHGGDVMRTHLANEQVNWVLQTEQLGTAHAVQQAAPFFKDNENIVVLYGDAPLITKETLEKLIDAKPENGIALLTVNLDNPTGYGRIIRENGNVVAIVEQKDANADQLNIKEVNTGVMVSDGASFKKWLARVGNNNAQGEYYLTDLIALANQDNCQVVAVQATDVMEVEGANNRLQLAALERYLQNKQASKLLLEGVMIYDPARFDLRGTLEHGKDVEIDVNVIIEGNVKLGDRVKIGAGCVLKNVVIGNDVEIKPYSVLEDSIVGEKAAIGPFSRLRPGAELAAETHVGNFVEIKKSTVGKGSKVNHLTYVGDSEIGSNCNIGAGVITCNYDGANKFKTIIGDDVFVGSDTQLVAPVKVANGATIGAGTTITRDVGENELVITRVAQRHIQGWQRPIKKK.

The tract at residues 1–229 (MTKKALSAVI…VMEVEGANNR (229 aa)) is pyrophosphorylase. UDP-N-acetyl-alpha-D-glucosamine-binding positions include 11–14 (LAAG), Lys25, Gln76, 81–82 (GT), 103–105 (YGD), Gly140, Glu154, Asn169, and Asn227. Asp105 lines the Mg(2+) pocket. Mg(2+) is bound at residue Asn227. Residues 230–250 (LQLAALERYLQNKQASKLLLE) form a linker region. Residues 251-456 (GVMIYDPARF…QGWQRPIKKK (206 aa)) are N-acetyltransferase. UDP-N-acetyl-alpha-D-glucosamine contacts are provided by Arg333 and Lys351. The active-site Proton acceptor is the His363. Residues Tyr366 and Asn377 each coordinate UDP-N-acetyl-alpha-D-glucosamine. Residues Ala380, 386–387 (NY), Ser405, Ala423, and Arg440 contribute to the acetyl-CoA site.

This sequence in the N-terminal section; belongs to the N-acetylglucosamine-1-phosphate uridyltransferase family. The protein in the C-terminal section; belongs to the transferase hexapeptide repeat family. Homotrimer. Mg(2+) serves as cofactor.

Its subcellular location is the cytoplasm. The catalysed reaction is alpha-D-glucosamine 1-phosphate + acetyl-CoA = N-acetyl-alpha-D-glucosamine 1-phosphate + CoA + H(+). It carries out the reaction N-acetyl-alpha-D-glucosamine 1-phosphate + UTP + H(+) = UDP-N-acetyl-alpha-D-glucosamine + diphosphate. Its pathway is nucleotide-sugar biosynthesis; UDP-N-acetyl-alpha-D-glucosamine biosynthesis; N-acetyl-alpha-D-glucosamine 1-phosphate from alpha-D-glucosamine 6-phosphate (route II): step 2/2. It functions in the pathway nucleotide-sugar biosynthesis; UDP-N-acetyl-alpha-D-glucosamine biosynthesis; UDP-N-acetyl-alpha-D-glucosamine from N-acetyl-alpha-D-glucosamine 1-phosphate: step 1/1. The protein operates within bacterial outer membrane biogenesis; LPS lipid A biosynthesis. Its function is as follows. Catalyzes the last two sequential reactions in the de novo biosynthetic pathway for UDP-N-acetylglucosamine (UDP-GlcNAc). The C-terminal domain catalyzes the transfer of acetyl group from acetyl coenzyme A to glucosamine-1-phosphate (GlcN-1-P) to produce N-acetylglucosamine-1-phosphate (GlcNAc-1-P), which is converted into UDP-GlcNAc by the transfer of uridine 5-monophosphate (from uridine 5-triphosphate), a reaction catalyzed by the N-terminal domain. This chain is Bifunctional protein GlmU, found in Haemophilus influenzae (strain PittEE).